A 244-amino-acid chain; its full sequence is Phosphoadenosine 5'-phosphosulfate reductase (244 aa).

C239 functions as the Nucleophile; cysteine thiosulfonate intermediate in the catalytic mechanism.

Belongs to the PAPS reductase family. CysH subfamily.

It localises to the cytoplasm. It carries out the reaction [thioredoxin]-disulfide + sulfite + adenosine 3',5'-bisphosphate + 2 H(+) = [thioredoxin]-dithiol + 3'-phosphoadenylyl sulfate. It functions in the pathway sulfur metabolism; hydrogen sulfide biosynthesis; sulfite from sulfate: step 3/3. Catalyzes the formation of sulfite from phosphoadenosine 5'-phosphosulfate (PAPS) using thioredoxin as an electron donor. In Cronobacter sakazakii (strain ATCC BAA-894) (Enterobacter sakazakii), this protein is Phosphoadenosine 5'-phosphosulfate reductase.